We begin with the raw amino-acid sequence, 388 residues long: Phosphoribosylformylglycinamidine cyclo-ligase, chloroplastic/mitochondrial (388 aa).

It belongs to the AIR synthase family.

It localises to the plastid. It is found in the chloroplast. The protein localises to the mitochondrion. It catalyses the reaction 2-formamido-N(1)-(5-O-phospho-beta-D-ribosyl)acetamidine + ATP = 5-amino-1-(5-phospho-beta-D-ribosyl)imidazole + ADP + phosphate + H(+). Its pathway is purine metabolism; IMP biosynthesis via de novo pathway; 5-amino-1-(5-phospho-D-ribosyl)imidazole from N(2)-formyl-N(1)-(5-phospho-D-ribosyl)glycinamide: step 2/2. The polypeptide is Phosphoribosylformylglycinamidine cyclo-ligase, chloroplastic/mitochondrial (PUR5) (Vigna unguiculata (Cowpea)).